The chain runs to 279 residues: Energy-coupling factor transporter ATP-binding protein EcfA1 (279 aa).

The 236-residue stretch at 5 to 240 folds into the ABC transporter domain; the sequence is IELKKVTFNY…GDELLQLGLD (236 aa). 40–47 provides a ligand contact to ATP; that stretch reads GHNGSGKS.

The protein belongs to the ABC transporter superfamily. Energy-coupling factor EcfA family. As to quaternary structure, forms a stable energy-coupling factor (ECF) transporter complex composed of 2 membrane-embedded substrate-binding proteins (S component), 2 ATP-binding proteins (A component) and 2 transmembrane proteins (T component).

It localises to the cell membrane. In terms of biological role, ATP-binding (A) component of a common energy-coupling factor (ECF) ABC-transporter complex. Unlike classic ABC transporters this ECF transporter provides the energy necessary to transport a number of different substrates. The protein is Energy-coupling factor transporter ATP-binding protein EcfA1 of Streptococcus pyogenes serotype M28 (strain MGAS6180).